A 706-amino-acid chain; its full sequence is Heat shock protein 75 kDa, mitochondrial (706 aa).

The transit peptide at M1 to Y60 directs the protein to the mitochondrion. The ATP site is built by N121 and D160. At S172 the chain carries Phosphoserine. N173 is a binding site for ATP. Phosphothreonine is present on T176. Position 196 is a phosphoserine (S196). F207 contacts ATP. N6-acetyllysine occurs at positions 264, 326, and 334. R404 contributes to the ATP binding site. N6-acetyllysine is present on residues K426, K433, and K468. Position 496 is a phosphothreonine (T496). Phosphoserine is present on S570.

This sequence belongs to the heat shock protein 90 family. As to quaternary structure, binds to the intracellular domain of tumor necrosis factor type 1 receptor. Binds to RB1. Interacts with SRC. Interacts with SDHA.

It localises to the mitochondrion. The protein resides in the mitochondrion inner membrane. The protein localises to the mitochondrion matrix. Functionally, chaperone that expresses an ATPase activity. Involved in maintaining mitochondrial function and polarization, downstream of PINK1 and mitochondrial complex I. Is a negative regulator of mitochondrial respiration able to modulate the balance between oxidative phosphorylation and aerobic glycolysis. The impact of TRAP1 on mitochondrial respiration is probably mediated by modulation of mitochondrial SRC and inhibition of SDHA. This chain is Heat shock protein 75 kDa, mitochondrial (Trap1), found in Rattus norvegicus (Rat).